The sequence spans 291 residues: 33 kDa chaperonin (291 aa).

Cystine bridges form between Cys229–Cys231 and Cys262–Cys265.

It belongs to the HSP33 family. In terms of processing, under oxidizing conditions two disulfide bonds are formed involving the reactive cysteines. Under reducing conditions zinc is bound to the reactive cysteines and the protein is inactive.

The protein localises to the cytoplasm. Redox regulated molecular chaperone. Protects both thermally unfolding and oxidatively damaged proteins from irreversible aggregation. Plays an important role in the bacterial defense system toward oxidative stress. The protein is 33 kDa chaperonin of Vibrio vulnificus (strain YJ016).